The following is a 70-amino-acid chain: Large ribosomal subunit protein bL31 (70 aa).

Residues C16, C18, C37, and C40 each coordinate Zn(2+).

Belongs to the bacterial ribosomal protein bL31 family. Type A subfamily. Part of the 50S ribosomal subunit. It depends on Zn(2+) as a cofactor.

In terms of biological role, binds the 23S rRNA. The protein is Large ribosomal subunit protein bL31 of Glaesserella parasuis serovar 5 (strain SH0165) (Haemophilus parasuis).